The chain runs to 424 residues: Glutamate-1-semialdehyde 2,1-aminomutase (424 aa).

N6-(pyridoxal phosphate)lysine is present on lysine 268.

This sequence belongs to the class-III pyridoxal-phosphate-dependent aminotransferase family. HemL subfamily. Pyridoxal 5'-phosphate serves as cofactor.

The protein localises to the cytoplasm. It carries out the reaction (S)-4-amino-5-oxopentanoate = 5-aminolevulinate. It participates in porphyrin-containing compound metabolism; protoporphyrin-IX biosynthesis; 5-aminolevulinate from L-glutamyl-tRNA(Glu): step 2/2. This Methanosarcina acetivorans (strain ATCC 35395 / DSM 2834 / JCM 12185 / C2A) protein is Glutamate-1-semialdehyde 2,1-aminomutase.